A 245-amino-acid polypeptide reads, in one-letter code: 6-carboxyhexanoate--CoA ligase (245 aa).

This sequence belongs to the BioW family. Homodimer. Requires Mg(2+) as cofactor.

The enzyme catalyses heptanedioate + ATP + CoA = 6-carboxyhexanoyl-CoA + AMP + diphosphate. Its pathway is metabolic intermediate metabolism; pimeloyl-CoA biosynthesis; pimeloyl-CoA from pimelate: step 1/1. In terms of biological role, catalyzes the transformation of pimelate into pimeloyl-CoA with concomitant hydrolysis of ATP to AMP. The polypeptide is 6-carboxyhexanoate--CoA ligase (Methanococcus vannielii (strain ATCC 35089 / DSM 1224 / JCM 13029 / OCM 148 / SB)).